The sequence spans 628 residues: Chaperone protein HtpG (628 aa).

The tract at residues 1-340 (MSTETLQKET…SADLPLNVSR (340 aa)) is a; substrate-binding. The interval 341-557 (EILQHSKDIE…EHDLSGNLER (217 aa)) is b. A c region spans residues 558-628 (LLKAAGQKTP…FVRRVNAMLA (71 aa)).

This sequence belongs to the heat shock protein 90 family. Homodimer.

It localises to the cytoplasm. Its function is as follows. Molecular chaperone. Has ATPase activity. The sequence is that of Chaperone protein HtpG from Methylobacillus flagellatus (strain ATCC 51484 / DSM 6875 / VKM B-1610 / KT).